The chain runs to 369 residues: Glutamate 5-kinase (369 aa).

Lysine 9 is a binding site for ATP. The substrate site is built by serine 49, aspartate 136, and asparagine 148. ATP contacts are provided by residues 168–169 (TD) and 210–216 (TGGMLTK). Residues 275 to 355 (QGSIWVDKGA…KGVLIYRDDW (81 aa)) enclose the PUA domain.

The protein belongs to the glutamate 5-kinase family.

The protein resides in the cytoplasm. The enzyme catalyses L-glutamate + ATP = L-glutamyl 5-phosphate + ADP. Its pathway is amino-acid biosynthesis; L-proline biosynthesis; L-glutamate 5-semialdehyde from L-glutamate: step 1/2. In terms of biological role, catalyzes the transfer of a phosphate group to glutamate to form L-glutamate 5-phosphate. This chain is Glutamate 5-kinase, found in Streptococcus pneumoniae (strain 70585).